Here is a 343-residue protein sequence, read N- to C-terminus: Heat-inducible transcription repressor HrcA (343 aa).

It belongs to the HrcA family.

Functionally, negative regulator of class I heat shock genes (grpE-dnaK-dnaJ and groELS operons). Prevents heat-shock induction of these operons. This chain is Heat-inducible transcription repressor HrcA, found in Alkaliphilus metalliredigens (strain QYMF).